The sequence spans 66 residues: Large ribosomal subunit protein uL30 (66 aa).

This sequence belongs to the universal ribosomal protein uL30 family. In terms of assembly, part of the 50S ribosomal subunit.

The protein is Large ribosomal subunit protein uL30 of Azorhizobium caulinodans (strain ATCC 43989 / DSM 5975 / JCM 20966 / LMG 6465 / NBRC 14845 / NCIMB 13405 / ORS 571).